Consider the following 342-residue polypeptide: Aspartate carbamoyltransferase catalytic subunit (342 aa).

Residues Arg59 and Thr60 each contribute to the carbamoyl phosphate site. Lys87 lines the L-aspartate pocket. Residues Arg109, His142, and Gln145 each contribute to the carbamoyl phosphate site. The L-aspartate site is built by Arg182 and Arg253. Residues Gly294 and Pro295 each contribute to the carbamoyl phosphate site.

It belongs to the aspartate/ornithine carbamoyltransferase superfamily. ATCase family. As to quaternary structure, heterododecamer (2C3:3R2) of six catalytic PyrB chains organized as two trimers (C3), and six regulatory PyrI chains organized as three dimers (R2).

The enzyme catalyses carbamoyl phosphate + L-aspartate = N-carbamoyl-L-aspartate + phosphate + H(+). The protein operates within pyrimidine metabolism; UMP biosynthesis via de novo pathway; (S)-dihydroorotate from bicarbonate: step 2/3. Catalyzes the condensation of carbamoyl phosphate and aspartate to form carbamoyl aspartate and inorganic phosphate, the committed step in the de novo pyrimidine nucleotide biosynthesis pathway. The sequence is that of Aspartate carbamoyltransferase catalytic subunit from Synechococcus sp. (strain WH7803).